Reading from the N-terminus, the 957-residue chain is Glycine dehydrogenase (decarboxylating) 2 (957 aa).

The residue at position 707 (Lys-707) is an N6-(pyridoxal phosphate)lysine.

Belongs to the GcvP family. In terms of assembly, the glycine cleavage system is composed of four proteins: P, T, L and H. Pyridoxal 5'-phosphate serves as cofactor.

The enzyme catalyses N(6)-[(R)-lipoyl]-L-lysyl-[glycine-cleavage complex H protein] + glycine + H(+) = N(6)-[(R)-S(8)-aminomethyldihydrolipoyl]-L-lysyl-[glycine-cleavage complex H protein] + CO2. In terms of biological role, the glycine cleavage system catalyzes the degradation of glycine. The P protein binds the alpha-amino group of glycine through its pyridoxal phosphate cofactor; CO(2) is released and the remaining methylamine moiety is then transferred to the lipoamide cofactor of the H protein. The polypeptide is Glycine dehydrogenase (decarboxylating) 2 (gcvP2) (Pseudomonas putida (strain ATCC 47054 / DSM 6125 / CFBP 8728 / NCIMB 11950 / KT2440)).